The primary structure comprises 148 residues: Large ribosomal subunit protein uL15 (148 aa).

Over residues 1–30 (MPSRLRKTRKLRGHVSHGHGRIGKHRKHPG) the composition is skewed to basic residues. Residues 1–37 (MPSRLRKTRKLRGHVSHGHGRIGKHRKHPGGRGNAGG) are disordered. The residue at position 39 (His-39) is a (3S)-3-hydroxyhistidine. An N6-acetyllysine mark is found at Lys-47 and Lys-55. Ser-68 bears the Phosphoserine mark. Residue Lys-110 is modified to N6-acetyllysine.

It belongs to the universal ribosomal protein uL15 family. Component of the large ribosomal subunit. Post-translationally, hydroxylated on His-39 by MINA.

The protein resides in the cytoplasm. Functionally, component of the large ribosomal subunit. The ribosome is a large ribonucleoprotein complex responsible for the synthesis of proteins in the cell. In Bos taurus (Bovine), this protein is Large ribosomal subunit protein uL15 (RPL27A).